A 166-amino-acid polypeptide reads, in one-letter code: uncharacterized protein (166 aa).

Composition is skewed to basic and acidic residues over residues 1–13 (MAEVSKKRCEHNS), 21–112 (KAND…KTKE), and 119–137 (DNVENKDKNEVYENIKEGG). The interval 1 to 144 (MAEVSKKRCE…EGGSKAWNKT (144 aa)) is disordered. 8 consecutive repeat copies span residues 31 to 41 (DKTKETAGSAK), 42 to 52 (DKTKETAGSAK), 53 to 63 (DKTKETAESAK), 64 to 74 (DKTKETAGSAK), 75 to 85 (DKTKETAESAK), 86 to 96 (DKTKETAGSAK), 97 to 107 (DKTKETAESAK), and 108 to 118 (DKTKETAGNVR). Residues 31 to 118 (DKTKETAGSA…KTKETAGNVR (88 aa)) are 8 X 11 AA approximate tandem repeats of D-K-T-K-E-T-A-G/E-S-A-K.

This sequence belongs to the LEA type 1 family.

This is an uncharacterized protein from Encephalitozoon cuniculi (strain GB-M1) (Microsporidian parasite).